We begin with the raw amino-acid sequence, 479 residues long: Kynurenine 3-monooxygenase (479 aa).

FAD is bound by residues Val19, 37–40 (YEAR), and Ala57. Residues Arg85 and Tyr99 each coordinate L-kynurenine. FAD-binding positions include Arg111, Leu136, Thr172, Asp304, and 317–318 (MN). The L-kynurenine site is built by Asn363 and Tyr398. The next 2 helical transmembrane spans lie at 385–404 (FLHA…VAFT) and 425–445 (GLFV…VHHL).

This sequence belongs to the aromatic-ring hydroxylase family. KMO subfamily. Requires FAD as cofactor. In terms of tissue distribution, expressed by organs containing secondary lymphoid tissue, such as the lung, spleen, mesenteric lymph node, thymus and peripheral lymph nodes.

It localises to the mitochondrion outer membrane. It catalyses the reaction L-kynurenine + NADPH + O2 + H(+) = 3-hydroxy-L-kynurenine + NADP(+) + H2O. It functions in the pathway cofactor biosynthesis; NAD(+) biosynthesis; quinolinate from L-kynurenine: step 1/3. In terms of biological role, catalyzes the hydroxylation of L-kynurenine (L-Kyn) to form 3-hydroxy-L-kynurenine (L-3OHKyn). Required for synthesis of quinolinic acid, a neurotoxic NMDA receptor antagonist and potential endogenous inhibitor of NMDA receptor signaling in axonal targeting, synaptogenesis and apoptosis during brain development. Quinolinic acid may also affect NMDA receptor signaling in pancreatic beta cells, osteoblasts, myocardial cells, and the gastrointestinal tract. The sequence is that of Kynurenine 3-monooxygenase from Mus musculus (Mouse).